The primary structure comprises 428 residues: Histidinol dehydrogenase (428 aa).

Tyrosine 124, glutamine 186, and asparagine 209 together coordinate NAD(+). Serine 233, glutamine 255, and histidine 258 together coordinate substrate. Positions 255 and 258 each coordinate Zn(2+). Active-site proton acceptor residues include glutamate 322 and histidine 323. Substrate-binding residues include histidine 323, aspartate 356, glutamate 410, and histidine 415. Zn(2+) is bound at residue aspartate 356. Histidine 415 is a binding site for Zn(2+).

The protein belongs to the histidinol dehydrogenase family. The cofactor is Zn(2+).

It catalyses the reaction L-histidinol + 2 NAD(+) + H2O = L-histidine + 2 NADH + 3 H(+). It functions in the pathway amino-acid biosynthesis; L-histidine biosynthesis; L-histidine from 5-phospho-alpha-D-ribose 1-diphosphate: step 9/9. Its function is as follows. Catalyzes the sequential NAD-dependent oxidations of L-histidinol to L-histidinaldehyde and then to L-histidine. The polypeptide is Histidinol dehydrogenase (Bacteroides fragilis (strain YCH46)).